The chain runs to 506 residues: MIDNVITAIDRVAAEHPTRVAYDYEGTQYTYAQLKEGSDRLAGFFAESLPAGEPIIVYGGQTFDMVEVFLGLSKSGHAYIPIDTHSPNERITQVQDVAHAPAVIEVAPLPITVPDVKIIRAPALHQAEQSHAPIHSLQHAVAGDDNYYIIFTSGTTGKPKGVQISHDNLLSYVNWNISDFGLEEGVVAMSQPPYSFDLSVMDLYPTLVLGGTLKALPKEVTDNFKELFATLPKLGLNEWVSTPSFVEIALLDPNFKQENYPNLTHFLFCGEELVNKTAQALITRFPKATVYNTYGPTEATVAVTGMAITQAIVDQYPRLPIGYAKPDTNVYVVDEQGEQVSAGTEGELMIVGPSVSKGYLNNPDKTAAAFFKAGNQRGYRSGDLVTMTADGMVFYRGRTDFQVKLHGYRIELEDVDHNLNQVSYIKQASTVPRYDKDHKVAQLIAFAVAKPNDFDSEMKLTQAIKAELGKMVMEYMIPQRIIYRDQLPLTANGKVDRKALIAEVNH.

An ATP-binding site is contributed by Thr-152–Ser-153. Asp-197 lines the D-alanine pocket. ATP is bound at residue Asn-292–Thr-297. Val-301 serves as a coordination point for D-alanine. Residues Asp-383, Tyr-395–Arg-398, and Lys-494 each bind ATP. Residue Lys-494 coordinates D-alanine.

The protein belongs to the ATP-dependent AMP-binding enzyme family. DltA subfamily.

The protein localises to the cytoplasm. It carries out the reaction holo-[D-alanyl-carrier protein] + D-alanine + ATP = D-alanyl-[D-alanyl-carrier protein] + AMP + diphosphate. The protein operates within cell wall biogenesis; lipoteichoic acid biosynthesis. In terms of biological role, catalyzes the first step in the D-alanylation of lipoteichoic acid (LTA), the activation of D-alanine and its transfer onto the D-alanyl carrier protein (Dcp) DltC. In an ATP-dependent two-step reaction, forms a high energy D-alanyl-AMP intermediate, followed by transfer of the D-alanyl residue as a thiol ester to the phosphopantheinyl prosthetic group of the Dcp. D-alanylation of LTA plays an important role in modulating the properties of the cell wall in Gram-positive bacteria, influencing the net charge of the cell wall. This Lacticaseibacillus rhamnosus (Lactobacillus rhamnosus) protein is D-alanine--D-alanyl carrier protein ligase.